A 284-amino-acid polypeptide reads, in one-letter code: F-box only protein 6 (284 aa).

One can recognise an F-box domain in the interval 1–48 (MVNINELPENILLELFTHVPAPQLLRNCRLVCSLWRDLIDVMTLWKRK). An FBA domain is found at 69 to 250 (FYILCSLQRN…VTNSSIIVSH (182 aa)). A phosphoserine mark is found at S249, S268, S275, S278, and S283.

In terms of assembly, part of a SCF (SKP1-cullin-F-box) protein ligase complex. Interacts with VCP, CHEK1 and CUL1.

It is found in the cytoplasm. Its pathway is protein modification; protein ubiquitination. Substrate-recognition component of some SCF (SKP1-CUL1-F-box protein)-type E3 ubiquitin ligase complexes. Involved in endoplasmic reticulum-associated degradation pathway (ERAD) for misfolded lumenal proteins by recognizing and binding sugar chains on unfolded glycoproteins that are retrotranslocated into the cytosol and promoting their ubiquitination and subsequent degradation. Able to recognize and bind denatured glycoproteins, which are modified with not only high-mannose but also complex-type oligosaccharides. Also recognizes sulfated glycans. Also involved in DNA damage response by specifically recognizing activated CHEK1 (phosphorylated on 'Ser-345'), promoting its ubiquitination and degradation. Ubiquitination of CHEK1 is required to ensure that activated CHEK1 does not accumulate as cells progress through S phase, or when replication forks encounter transient impediments during normal DNA replication. The chain is F-box only protein 6 (Fbxo6) from Rattus norvegicus (Rat).